Reading from the N-terminus, the 170-residue chain is Zinc finger matrin-type protein 5 (170 aa).

Residues 51–79 (EQNKRPCRKFLLTGQCDFGSNCRFSHMSE) form a C3H1-type zinc finger. The segment at 150-170 (PPSLRAPPPGGWPLQPRVQWG) is disordered.

As to quaternary structure, component of the U11/U12 snRNPs that are part of the U12-type spliceosome. Not found in the major spliceosome.

Its subcellular location is the nucleus. This chain is Zinc finger matrin-type protein 5 (ZMAT5), found in Homo sapiens (Human).